The following is a 49-amino-acid chain: Large ribosomal subunit protein bL33 (49 aa).

The protein belongs to the bacterial ribosomal protein bL33 family.

The protein is Large ribosomal subunit protein bL33 of Thermosipho melanesiensis (strain DSM 12029 / CIP 104789 / BI429).